Consider the following 367-residue polypeptide: Pyrimidine monooxygenase RutA (367 aa).

FMN is bound by residues 49-50 (IK), Asn-115, Glu-124, 140-141 (RY), and Ser-190.

It belongs to the NtaA/SnaA/DszA monooxygenase family. RutA subfamily.

It catalyses the reaction uracil + FMNH2 + NADH + O2 = (Z)-3-ureidoacrylate + FMN + NAD(+) + H2O + H(+). The catalysed reaction is thymine + FMNH2 + NADH + O2 = (Z)-2-methylureidoacrylate + FMN + NAD(+) + H2O + H(+). In terms of biological role, catalyzes the pyrimidine ring opening between N-3 and C-4 by an unusual flavin hydroperoxide-catalyzed mechanism, adding oxygen atoms in the process to yield ureidoacrylate peracid, that immediately reacts with FMN forming ureidoacrylate and FMN-N(5)-oxide. The FMN-N(5)-oxide reacts spontaneously with NADH to produce FMN. Requires the flavin reductase RutF to regenerate FMN in vivo. This is Pyrimidine monooxygenase RutA from Yersinia enterocolitica serotype O:8 / biotype 1B (strain NCTC 13174 / 8081).